The primary structure comprises 600 residues: Elongation factor 4 (600 aa).

Positions 5 to 187 (KYIRNFSIIA…AIVSKLPPPK (183 aa)) constitute a tr-type G domain. GTP-binding positions include 17–22 (DHGKST) and 134–137 (NKLD).

It belongs to the TRAFAC class translation factor GTPase superfamily. Classic translation factor GTPase family. LepA subfamily.

The protein localises to the cell inner membrane. It catalyses the reaction GTP + H2O = GDP + phosphate + H(+). Functionally, required for accurate and efficient protein synthesis under certain stress conditions. May act as a fidelity factor of the translation reaction, by catalyzing a one-codon backward translocation of tRNAs on improperly translocated ribosomes. Back-translocation proceeds from a post-translocation (POST) complex to a pre-translocation (PRE) complex, thus giving elongation factor G a second chance to translocate the tRNAs correctly. Binds to ribosomes in a GTP-dependent manner. This chain is Elongation factor 4, found in Rickettsia rickettsii (strain Iowa).